The primary structure comprises 417 residues: Serine hydroxymethyltransferase (417 aa).

Residues leucine 121 and 125-127 (GHL) each bind (6S)-5,6,7,8-tetrahydrofolate. An N6-(pyridoxal phosphate)lysine modification is found at lysine 229. 355–357 (SPF) lines the (6S)-5,6,7,8-tetrahydrofolate pocket.

The protein belongs to the SHMT family. In terms of assembly, homodimer. It depends on pyridoxal 5'-phosphate as a cofactor.

The protein resides in the cytoplasm. The catalysed reaction is (6R)-5,10-methylene-5,6,7,8-tetrahydrofolate + glycine + H2O = (6S)-5,6,7,8-tetrahydrofolate + L-serine. The protein operates within one-carbon metabolism; tetrahydrofolate interconversion. Its pathway is amino-acid biosynthesis; glycine biosynthesis; glycine from L-serine: step 1/1. Functionally, catalyzes the reversible interconversion of serine and glycine with tetrahydrofolate (THF) serving as the one-carbon carrier. This reaction serves as the major source of one-carbon groups required for the biosynthesis of purines, thymidylate, methionine, and other important biomolecules. Also exhibits THF-independent aldolase activity toward beta-hydroxyamino acids, producing glycine and aldehydes, via a retro-aldol mechanism. This is Serine hydroxymethyltransferase from Xylella fastidiosa (strain M23).